We begin with the raw amino-acid sequence, 355 residues long: MSNFAKIFQSNWIDLNKLGKLEIFLKTILGIYKAPNRTHLLAHAADISSFYAVKNIYEYMKNDDEGKEILKNKPLLIRQDIQFNELKKLPKNTLGYKYMEFLETYKLHAHDREVAHFFDNINYSYILTRYRQIHDIGHVVYNLNISIESEAALKMIELIHTKLPITLLAILVAPFMSPLYRFQYIFKDKIPPNFLNPNFDYTYXDDYNYIDELSLKQYVYNLTEYFHIDKINNNLFFQKLYKYYFDNLNNSNHIRGTIIYGYNNENNNDIIFDDINNEYIFLKNPEKNYFLFKYKPRQTLLNQLYPWAYMAGMAAKKPLHSIHIENWLDKDIDIFRKTYNIIPLPDHLNLMSGIN.

Zn(2+)-binding residues include His134, Asp135, His138, and Glu150.

It belongs to the COQ4 family. Component of a multi-subunit COQ enzyme complex. Zn(2+) is required as a cofactor.

It localises to the mitochondrion inner membrane. It carries out the reaction a 4-hydroxy-3-methoxy-5-(all-trans-polyprenyl)benzoate + H(+) = a 2-methoxy-6-(all-trans-polyprenyl)phenol + CO2. Its pathway is cofactor biosynthesis; ubiquinone biosynthesis. Lyase that catalyzes the C1-decarboxylation of 4-hydroxy-3-methoxy-5-(all-trans-polyprenyl)benzoic acid into 2-methoxy-6-(all-trans-polyprenyl)phenol during ubiquinone biosynthesis. The chain is Ubiquinone biosynthesis protein COQ4 homolog, mitochondrial from Plasmodium yoelii yoelii.